A 238-amino-acid chain; its full sequence is 3-dehydroquinate dehydratase (238 aa).

3-dehydroquinate is bound by residues 35 to 37 (ELR) and Arg70. His133 acts as the Proton donor/acceptor in catalysis. Residue Lys160 is the Schiff-base intermediate with substrate of the active site. Residues Arg202 and Gln225 each coordinate 3-dehydroquinate.

The protein belongs to the type-I 3-dehydroquinase family. Homodimer.

It catalyses the reaction 3-dehydroquinate = 3-dehydroshikimate + H2O. The protein operates within metabolic intermediate biosynthesis; chorismate biosynthesis; chorismate from D-erythrose 4-phosphate and phosphoenolpyruvate: step 3/7. Involved in the third step of the chorismate pathway, which leads to the biosynthesis of aromatic amino acids. Catalyzes the cis-dehydration of 3-dehydroquinate (DHQ) and introduces the first double bond of the aromatic ring to yield 3-dehydroshikimate. This is 3-dehydroquinate dehydratase from Staphylococcus aureus (strain bovine RF122 / ET3-1).